The chain runs to 104 residues: Large ribosomal subunit protein bL21 (104 aa).

The protein belongs to the bacterial ribosomal protein bL21 family. Part of the 50S ribosomal subunit. Contacts protein L20.

Functionally, this protein binds to 23S rRNA in the presence of protein L20. The sequence is that of Large ribosomal subunit protein bL21 from Helicobacter pylori (strain J99 / ATCC 700824) (Campylobacter pylori J99).